Reading from the N-terminus, the 321-residue chain is Biotin synthase (321 aa).

The 230-residue stretch at phenylalanine 44–arginine 273 folds into the Radical SAM core domain. 3 residues coordinate [4Fe-4S] cluster: cysteine 62, cysteine 66, and cysteine 69. Serine 106, cysteine 138, cysteine 198, and arginine 268 together coordinate [2Fe-2S] cluster.

It belongs to the radical SAM superfamily. Biotin synthase family. Homodimer. It depends on [4Fe-4S] cluster as a cofactor. [2Fe-2S] cluster is required as a cofactor.

The enzyme catalyses (4R,5S)-dethiobiotin + (sulfur carrier)-SH + 2 reduced [2Fe-2S]-[ferredoxin] + 2 S-adenosyl-L-methionine = (sulfur carrier)-H + biotin + 2 5'-deoxyadenosine + 2 L-methionine + 2 oxidized [2Fe-2S]-[ferredoxin]. It participates in cofactor biosynthesis; biotin biosynthesis; biotin from 7,8-diaminononanoate: step 2/2. Its function is as follows. Catalyzes the conversion of dethiobiotin (DTB) to biotin by the insertion of a sulfur atom into dethiobiotin via a radical-based mechanism. This is Biotin synthase from Akkermansia muciniphila (strain ATCC BAA-835 / DSM 22959 / JCM 33894 / BCRC 81048 / CCUG 64013 / CIP 107961 / Muc).